The sequence spans 514 residues: Developmental and secondary metabolism regulator veA (514 aa).

A Velvet domain is found at 26 to 218 (NRHLWYQLTV…ADQGCHVRIR (193 aa)). Positions 40 to 45 (ERARAC) match the Nuclear localization signal motif. Residues 219-463 (RDVRMRKRDA…PIGSKRKHDQ (245 aa)) form a disordered region. Basic and acidic residues predominate over residues 228–243 (AKSNNGRDRREDDMAR). The span at 256 to 267 (SAAARARSMSNS) shows a compositional bias: low complexity. Positions 386 to 396 (SYPSTPVSSHP) are enriched in polar residues. Residues 411 to 448 (KSPSNSVSPSNSSLKITDLLVQPLPSSEPKLEVGSAPC) are PEST. The span at 412–423 (SPSNSVSPSNSS) shows a compositional bias: low complexity.

Belongs to the velvet family. VeA subfamily. Component of the heterotrimeric velvet complex composed of laeA, veA and velB; VeA acting as a bridging protein between laeA and velB.

It is found in the nucleus. Its subcellular location is the cytoplasm. In terms of biological role, component of the velvet transcription factor complex that controls sexual/asexual developmental ratio in response to light, promoting sexual development in the darkness while stimulating asexual sporulation under illumination. The velvet complex hat acts as a global regulator for secondary metabolite gene expression. Controls the expression of the cephalosporin C gene cluster. Regulates hyphal fragmentation. The polypeptide is Developmental and secondary metabolism regulator veA (Hapsidospora chrysogenum (strain ATCC 11550 / CBS 779.69 / DSM 880 / IAM 14645 / JCM 23072 / IMI 49137) (Acremonium chrysogenum)).